The primary structure comprises 295 residues: MTTITDLYPSRGAAEVSVPRQDPVLWGTPDTPGPITAADLQSYEHDGFLAVPQLIGDDEVALYHAELERLIHDPAVRADERSIVEPQSQEIRSVFEVHKISEIFAQLVRDERVVGRARQILGSDVYVHQSRINVKPGFGASGFYWHSDFETWHAEDGLPNMRTVSVSIALTENYDTNGGLMIMPGSHKTFLGCAGATPKDNYKKSLQMQDAGTPSDEALTKFADRHGIRLFTGRAGSATWFDCNCLHGSGDNITPFPRSNVFIVFNSVENTAVEPFSAPVRRPEFIGARDFTPVR.

An L-ectoine-binding site is contributed by glutamine 129. Residue lysine 135 participates in 2-oxoglutarate binding. Residues histidine 146, aspartate 148, and histidine 247 each coordinate Fe cation.

This sequence belongs to the PhyH family. EctD subfamily. As to quaternary structure, homodimer. Requires Fe(2+) as cofactor.

The enzyme catalyses L-ectoine + 2-oxoglutarate + O2 = 5-hydroxyectoine + succinate + CO2. In terms of biological role, involved in the biosynthesis of 5-hydroxyectoine, called compatible solute, which helps organisms to survive extreme osmotic stress by acting as a highly soluble organic osmolyte. Catalyzes the 2-oxoglutarate-dependent selective hydroxylation of L-ectoine to yield (4S,5S)-5-hydroxyectoine. The chain is Ectoine dioxygenase from Streptomyces avermitilis (strain ATCC 31267 / DSM 46492 / JCM 5070 / NBRC 14893 / NCIMB 12804 / NRRL 8165 / MA-4680).